A 431-amino-acid chain; its full sequence is Arginine biosynthesis bifunctional protein ArgJ, mitochondrial (431 aa).

Positions 174, 200, 211, 297, 426, and 431 each coordinate substrate. Residue Thr-211 is the Nucleophile of the active site.

Belongs to the ArgJ family. Heterodimer of an alpha and a beta chain. Post-translationally, the alpha and beta chains are autoproteolytically processed from a single precursor protein within the mitochondrion.

It localises to the mitochondrion matrix. The enzyme catalyses N(2)-acetyl-L-ornithine + L-glutamate = N-acetyl-L-glutamate + L-ornithine. The catalysed reaction is L-glutamate + acetyl-CoA = N-acetyl-L-glutamate + CoA + H(+). It functions in the pathway amino-acid biosynthesis; L-arginine biosynthesis; L-ornithine and N-acetyl-L-glutamate from L-glutamate and N(2)-acetyl-L-ornithine (cyclic): step 1/1. The protein operates within amino-acid biosynthesis; L-arginine biosynthesis; N(2)-acetyl-L-ornithine from L-glutamate: step 1/4. In terms of biological role, catalyzes two activities which are involved in the cyclic version of arginine biosynthesis: the synthesis of acetylglutamate from glutamate and acetyl-CoA, and of ornithine by transacetylation between acetylornithine and glutamate. The polypeptide is Arginine biosynthesis bifunctional protein ArgJ, mitochondrial (Yarrowia lipolytica (strain CLIB 122 / E 150) (Yeast)).